A 357-amino-acid polypeptide reads, in one-letter code: 4-hydroxy-3-methylbut-2-en-1-yl diphosphate synthase (flavodoxin) (357 aa).

Residues Cys-264, Cys-267, Cys-299, and Glu-306 each contribute to the [4Fe-4S] cluster site.

This sequence belongs to the IspG family. [4Fe-4S] cluster is required as a cofactor.

The catalysed reaction is (2E)-4-hydroxy-3-methylbut-2-enyl diphosphate + oxidized [flavodoxin] + H2O + 2 H(+) = 2-C-methyl-D-erythritol 2,4-cyclic diphosphate + reduced [flavodoxin]. Its pathway is isoprenoid biosynthesis; isopentenyl diphosphate biosynthesis via DXP pathway; isopentenyl diphosphate from 1-deoxy-D-xylulose 5-phosphate: step 5/6. Its function is as follows. Converts 2C-methyl-D-erythritol 2,4-cyclodiphosphate (ME-2,4cPP) into 1-hydroxy-2-methyl-2-(E)-butenyl 4-diphosphate. In Campylobacter jejuni subsp. jejuni serotype O:2 (strain ATCC 700819 / NCTC 11168), this protein is 4-hydroxy-3-methylbut-2-en-1-yl diphosphate synthase (flavodoxin).